The chain runs to 196 residues: Large ribosomal subunit protein uL18 (196 aa).

This sequence belongs to the universal ribosomal protein uL18 family. As to quaternary structure, part of the 50S ribosomal subunit. Contacts the 5S and 23S rRNAs.

Functionally, this is one of the proteins that bind and probably mediate the attachment of the 5S RNA into the large ribosomal subunit, where it forms part of the central protuberance. The protein is Large ribosomal subunit protein uL18 of Sulfurisphaera tokodaii (strain DSM 16993 / JCM 10545 / NBRC 100140 / 7) (Sulfolobus tokodaii).